The chain runs to 519 residues: Maturase K (519 aa).

It belongs to the intron maturase 2 family. MatK subfamily.

It localises to the plastid. The protein localises to the chloroplast. Usually encoded in the trnK tRNA gene intron. Probably assists in splicing its own and other chloroplast group II introns. The sequence is that of Maturase K from Dioscorea elephantipes (Elephant's foot yam).